The chain runs to 391 residues: Esterase (391 aa).

Positions 1 to 26 (MEFPETNNNPIITLSFLLCMLSLAYA) are cleaved as a signal peptide. Ser41 functions as the Nucleophile in the catalytic mechanism. Asn186, Asn193, and Asn313 each carry an N-linked (GlcNAc...) asparagine glycan. Active-site residues include Asp347 and His350.

It belongs to the 'GDSL' lipolytic enzyme family. Post-translationally, the N-terminus is blocked. In terms of processing, glycosylated.

Has lipase and esterase activities. May be involved in plant defense. The sequence is that of Esterase from Hevea brasiliensis (Para rubber tree).